The following is a 201-amino-acid chain: Protease (201 aa).

Catalysis depends on residues H53, D70, and C121.

The protein belongs to the peptidase C5 family. As to quaternary structure, interacts with protease cofactor pVI-C; this interaction is necessary for protease activation.

The protein localises to the virion. It is found in the host nucleus. It carries out the reaction Cleaves proteins of the adenovirus and its host cell at two consensus sites: -Yaa-Xaa-Gly-Gly-|-Xaa- and -Yaa-Xaa-Gly-Xaa-|-Gly- (in which Yaa is Met, Ile or Leu, and Xaa is any amino acid).. Its activity is regulated as follows. Requires DNA and protease cofactor for maximal activation. Inside nascent virions, becomes partially activated by binding to the viral DNA, allowing it to cleave the cofactor that binds to the protease and fully activates it. Actin, like the viral protease cofactor, seems to act as a cofactor in the cleavage of cytokeratin 18 and of actin itself. Functionally, cleaves viral precursor proteins (pTP, pIIIa, pVI, pVII, pVIII, and pX) inside newly assembled particles giving rise to mature virions. Protease complexed to its cofactor slides along the viral DNA to specifically locate and cleave the viral precursors. Mature virions have a weakened organization compared to the unmature virions, thereby facilitating subsequent uncoating. Without maturation, the particle lacks infectivity and is unable to uncoat. Late in adenovirus infection, in the cytoplasm, may participate in the cytoskeleton destruction. Cleaves host cell cytoskeletal keratins K7 and K18. The protein is Protease of Equine adenovirus B serotype 2 (EAdV-2).